The primary structure comprises 197 residues: Holliday junction branch migration complex subunit RuvA (197 aa).

Residues 1-63 are domain I; the sequence is MYAYLKGIIT…EDAHLLYGFR (63 aa). The domain II stretch occupies residues 64 to 142; it reads SEDEKKLFLS…VAGDDLPAKV (79 aa). The segment at 143 to 147 is flexible linker; the sequence is AVQAS. A domain III region spans residues 148-197; the sequence is AENQELEEAMEAMLALGYKATELKKIKKFFEGTTDTAENYIKSALKMLVK.

This sequence belongs to the RuvA family. Homotetramer. Forms an RuvA(8)-RuvB(12)-Holliday junction (HJ) complex. HJ DNA is sandwiched between 2 RuvA tetramers; dsDNA enters through RuvA and exits via RuvB. An RuvB hexamer assembles on each DNA strand where it exits the tetramer. Each RuvB hexamer is contacted by two RuvA subunits (via domain III) on 2 adjacent RuvB subunits; this complex drives branch migration. In the full resolvosome a probable DNA-RuvA(4)-RuvB(12)-RuvC(2) complex forms which resolves the HJ.

The protein resides in the cytoplasm. Functionally, the RuvA-RuvB-RuvC complex processes Holliday junction (HJ) DNA during genetic recombination and DNA repair, while the RuvA-RuvB complex plays an important role in the rescue of blocked DNA replication forks via replication fork reversal (RFR). RuvA specifically binds to HJ cruciform DNA, conferring on it an open structure. The RuvB hexamer acts as an ATP-dependent pump, pulling dsDNA into and through the RuvAB complex. HJ branch migration allows RuvC to scan DNA until it finds its consensus sequence, where it cleaves and resolves the cruciform DNA. This Streptococcus pneumoniae serotype 19F (strain G54) protein is Holliday junction branch migration complex subunit RuvA.